A 361-amino-acid polypeptide reads, in one-letter code: Phospho-N-acetylmuramoyl-pentapeptide-transferase (361 aa).

The next 10 membrane-spanning stretches (helical) occupy residues 28 to 48, 70 to 90, 94 to 114, 129 to 149, 169 to 189, 205 to 225, 237 to 257, 264 to 284, 289 to 309, and 338 to 358; these read LSMF…IKFF, IGTP…GILL, LSNY…LLGA, VSFK…IYGL, LIIN…VGSS, PVIL…NIVF, MGEV…FLWF, IFMG…IGII, IVLA…IIQV, and TVVI…LATL.

It belongs to the glycosyltransferase 4 family. MraY subfamily. Requires Mg(2+) as cofactor.

The protein resides in the cell inner membrane. It catalyses the reaction UDP-N-acetyl-alpha-D-muramoyl-L-alanyl-gamma-D-glutamyl-meso-2,6-diaminopimeloyl-D-alanyl-D-alanine + di-trans,octa-cis-undecaprenyl phosphate = di-trans,octa-cis-undecaprenyl diphospho-N-acetyl-alpha-D-muramoyl-L-alanyl-D-glutamyl-meso-2,6-diaminopimeloyl-D-alanyl-D-alanine + UMP. It functions in the pathway cell wall biogenesis; peptidoglycan biosynthesis. In terms of biological role, catalyzes the initial step of the lipid cycle reactions in the biosynthesis of the cell wall peptidoglycan: transfers peptidoglycan precursor phospho-MurNAc-pentapeptide from UDP-MurNAc-pentapeptide onto the lipid carrier undecaprenyl phosphate, yielding undecaprenyl-pyrophosphoryl-MurNAc-pentapeptide, known as lipid I. The chain is Phospho-N-acetylmuramoyl-pentapeptide-transferase from Pelagibacter ubique (strain HTCC1062).